Here is a 151-residue protein sequence, read N- to C-terminus: MTGLERQLTEMLEAPVEATGYELVGLEFIRAGAHSTLRIYIDHENGINVDACAEVSHQVSAVLDVEDPISVAYSLEVSSPGLERPLFKAAHYEQFIGHEVSIVLKMAVANRRKWKGIIHSVDGETIAVTCEGQQEEFALSNISKANLIPKF.

The protein belongs to the RimP family.

Its subcellular location is the cytoplasm. Functionally, required for maturation of 30S ribosomal subunits. The polypeptide is Ribosome maturation factor RimP (Vibrio campbellii (strain ATCC BAA-1116)).